The chain runs to 37 residues: Large ribosomal subunit protein bL36 (37 aa).

It belongs to the bacterial ribosomal protein bL36 family.

The protein is Large ribosomal subunit protein bL36 of Desulforamulus reducens (strain ATCC BAA-1160 / DSM 100696 / MI-1) (Desulfotomaculum reducens).